The following is a 736-amino-acid chain: Probable beta-glucosidase L (736 aa).

The N-terminal stretch at 1 to 21 (MNYRVPSLKATALAMAALTQA) is a signal peptide. Asparagine 224 carries N-linked (GlcNAc...) asparagine glycosylation. Aspartate 252 is an active-site residue. N-linked (GlcNAc...) asparagine glycosylation is found at asparagine 295, asparagine 363, asparagine 429, and asparagine 607.

Belongs to the glycosyl hydrolase 3 family.

It is found in the secreted. The enzyme catalyses Hydrolysis of terminal, non-reducing beta-D-glucosyl residues with release of beta-D-glucose.. It participates in glycan metabolism; cellulose degradation. In terms of biological role, beta-glucosidases are one of a number of cellulolytic enzymes involved in the degradation of cellulosic biomass. Catalyzes the last step releasing glucose from the inhibitory cellobiose. In Aspergillus terreus (strain NIH 2624 / FGSC A1156), this protein is Probable beta-glucosidase L (bglL).